A 442-amino-acid polypeptide reads, in one-letter code: GTPase Der (442 aa).

2 EngA-type G domains span residues P3–V167 and P177–M350. GTP is bound by residues G9–S16, D56–F60, N119–E122, G183–S190, D230–L234, and N295–D298. The KH-like domain occupies V351–H435.

The protein belongs to the TRAFAC class TrmE-Era-EngA-EngB-Septin-like GTPase superfamily. EngA (Der) GTPase family. Associates with the 50S ribosomal subunit.

Functionally, GTPase that plays an essential role in the late steps of ribosome biogenesis. In Aromatoleum aromaticum (strain DSM 19018 / LMG 30748 / EbN1) (Azoarcus sp. (strain EbN1)), this protein is GTPase Der.